The chain runs to 314 residues: Large ribosomal subunit protein uL10 (314 aa).

The tract at residues 281–314 (GSTQETPEEKKEEAKKEEKSPDESISEGLGALFQ) is disordered. Basic and acidic residues predominate over residues 287-302 (PEEKKEEAKKEEKSPD).

The protein belongs to the universal ribosomal protein uL10 family. As to quaternary structure, part of the 50S ribosomal subunit. Forms part of the ribosomal stalk which helps the ribosome interact with GTP-bound translation factors. Forms a heptameric L10(L12)2(L12)2(L12)2 complex, where L10 forms an elongated spine to which the L12 dimers bind in a sequential fashion.

In terms of biological role, forms part of the ribosomal stalk, playing a central role in the interaction of the ribosome with GTP-bound translation factors. In Thermoplasma acidophilum (strain ATCC 25905 / DSM 1728 / JCM 9062 / NBRC 15155 / AMRC-C165), this protein is Large ribosomal subunit protein uL10.